A 1193-amino-acid chain; its full sequence is Cysteine protease ATG4 (1193 aa).

Disordered stretches follow at residues 23–284 and 358–474; these read AAIA…NKMS and WRPI…KKKS. The span at 35 to 49 shows a compositional bias: pro residues; that stretch reads NLPPPPPPDRIPPPK. A compositionally biased stretch (basic residues) spans 50-59; that stretch reads GRSHQQKFKI. Composition is skewed to basic and acidic residues over residues 60–72, 117–127, and 140–153; these read LRKEKDKDRRQPI, ANREEKKEKTS, and FGRDKDKDRGKPEE. Positions 170-185 are enriched in low complexity; sequence SSSTSTDSTTSRSITS. The segment covering 186–205 has biased composition (polar residues); the sequence is AFTRQNSIQSRRSPRTSFGQ. Over residues 227–238 the composition is skewed to low complexity; the sequence is SSTTSHDPSSDP. Polar residues-rich tracts occupy residues 253–262, 270–284, and 389–447; these read QGASMSSLSR, GGTSRSPDTFPNKMS, and LSMN…STLS. Cys-570 (nucleophile) is an active-site residue. Active-site residues include Asp-789 and His-791. Disordered regions lie at residues 807 to 869, 899 to 924, and 1000 to 1171; these read HSAK…SKYK, VPKSSFESNGAAQEQPKKQKGFTSTA, and QDEM…PARN. Low complexity predominate over residues 835–846; sequence RTPETPRSTTPS. 2 stretches are compositionally biased toward acidic residues: residues 1004–1029 and 1070–1084; these read PSWEEDDDAGLESVSEPDFEGDEFEE and HLDVEEANSTDDDNE. Composition is skewed to basic and acidic residues over residues 1097–1112 and 1152–1164; these read IARHLNRVDLSSKREQ and PRYEQNGETEQER.

This sequence belongs to the peptidase C54 family.

Its subcellular location is the cytoplasm. It localises to the nucleus. The protein localises to the preautophagosomal structure. It catalyses the reaction [protein]-C-terminal L-amino acid-glycyl-phosphatidylethanolamide + H2O = [protein]-C-terminal L-amino acid-glycine + a 1,2-diacyl-sn-glycero-3-phosphoethanolamine. Cysteine protease that plays a key role in cytoplasm to vacuole transport (Cvt) and autophagy by mediating both proteolytic activation and delipidation of ATG8. Required for selective autophagic degradation of the nucleus (nucleophagy) as well as for mitophagy which contributes to regulate mitochondrial quantity and quality by eliminating the mitochondria to a basal level to fulfill cellular energy requirements and preventing excess ROS production. The protease activity is required for proteolytic activation of ATG8: cleaves the C-terminal amino acid of ATG8 to reveal a C-terminal glycine. ATG8 ubiquitin-like activity requires the exposure of the glycine at the C-terminus for its conjugation to phosphatidylethanolamine (PE) and its insertion to membranes, which is necessary for autophagy. The ATG8-PE conjugate mediates tethering between adjacent membranes and stimulates membrane hemifusion, leading to expansion of the autophagosomal membrane during autophagy. In addition to the protease activity, also catalyzes deconjugation of PE-conjugated forms of ATG8 during macroautophagy: ATG8 delipidation is required to release the protein from membranes, which facilitates multiple events during macroautophagy, and especially for efficient autophagosome biogenesis, the assembly of ATG9-containing tubulovesicular clusters into phagophores/autophagosomes, and for the disassembly of PAS-associated ATG components. ATG8 delipidation by ATG4 also recycles ATG8-PE generated on inappropriate membranes to maintain a reservoir of unlipidated ATG8 that is required for autophagosome formation at the PAS. The polypeptide is Cysteine protease ATG4 (ATG4) (Cryptococcus neoformans var. neoformans serotype D (strain JEC21 / ATCC MYA-565) (Filobasidiella neoformans)).